The sequence spans 592 residues: Delta-like protein 3 (592 aa).

A signal peptide spans 1–32 (MVSLQVSPLSQTLILAFLLPQALPAGVFELQI). Over 33 to 490 (HSFGPGPGLG…LRQADPQRFL (458 aa)) the chain is Extracellular. The DSL domain occupies 174 to 213 (ARCEPPAVGAACARLCRSRSAPSRCGPGLRPCTPFPDECE). 6 consecutive EGF-like domains span residues 214 to 247 (APSV…PLCT), 272 to 308 (GPGP…LRCE), 310 to 349 (SGVT…SNCE), 351 to 387 (RVDR…PRCE), 389 to 425 (DLDD…RDCR), and 427 to 463 (RADP…VRCE). 18 disulfides stabilise this stretch: Cys218–Cys229, Cys222–Cys235, Cys237–Cys246, Cys276–Cys287, Cys281–Cys296, Cys298–Cys307, Cys314–Cys325, Cys319–Cys337, Cys339–Cys348, Cys355–Cys366, Cys360–Cys375, Cys377–Cys386, Cys393–Cys404, Cys398–Cys413, Cys415–Cys424, Cys431–Cys442, Cys436–Cys451, and Cys453–Cys462. Residues 491-511 (LPPALGLLVAAGLAGAALLVI) form a helical membrane-spanning segment. At 512-592 (HVRRRGPGQD…REDWLIQVLF (81 aa)) the chain is on the cytoplasmic side. The segment at 548 to 567 (QDGAGDGPSSSADWNHPEDG) is disordered.

Can bind and activate Notch-1 or another Notch receptor. Post-translationally, ubiquitinated by MIB (MIB1 or MIB2), leading to its endocytosis and subsequent degradation. As to expression, predominantly expressed in the neuroectoderm and paraxial mesoderm during embryogenesis.

It localises to the membrane. In terms of biological role, inhibits primary neurogenesis. May be required to divert neurons along a specific differentiation pathway. Plays a role in the formation of somite boundaries during segmentation of the paraxial mesoderm. This Mus musculus (Mouse) protein is Delta-like protein 3 (Dll3).